A 229-amino-acid chain; its full sequence is Meiotically up-regulated gene 31 protein (229 aa).

Disordered regions lie at residues 16-68 (EDSA…EEDK) and 189-229 (GLPE…TTWA).

The protein localises to the endoplasmic reticulum. Its function is as follows. Has a role in meiosis. The polypeptide is Meiotically up-regulated gene 31 protein (mug31) (Schizosaccharomyces pombe (strain 972 / ATCC 24843) (Fission yeast)).